Reading from the N-terminus, the 423-residue chain is Histidine--tRNA ligase (423 aa).

The protein belongs to the class-II aminoacyl-tRNA synthetase family. Homodimer.

It is found in the cytoplasm. The enzyme catalyses tRNA(His) + L-histidine + ATP = L-histidyl-tRNA(His) + AMP + diphosphate + H(+). In Actinobacillus succinogenes (strain ATCC 55618 / DSM 22257 / CCUG 43843 / 130Z), this protein is Histidine--tRNA ligase.